A 216-amino-acid polypeptide reads, in one-letter code: Outer-membrane lipoprotein LolB (216 aa).

Positions 1-21 (MLIFKICFYRLLPLSVLLLAA) are cleaved as a signal peptide. C22 carries the N-palmitoyl cysteine lipid modification. The S-diacylglycerol cysteine moiety is linked to residue C22.

The protein belongs to the LolB family. In terms of assembly, monomer.

It localises to the cell outer membrane. In terms of biological role, plays a critical role in the incorporation of lipoproteins in the outer membrane after they are released by the LolA protein. This is Outer-membrane lipoprotein LolB from Hamiltonella defensa subsp. Acyrthosiphon pisum (strain 5AT).